A 955-amino-acid chain; its full sequence is Calsyntenin-2 (955 aa).

Positions 1–20 (MLPGRLCWVPLLLALGVGSG) are cleaved as a signal peptide. Over 21-831 (SGGGGDSRQR…SIQHSSVVPS (811 aa)) the chain is Extracellular. 2 Cadherin domains span residues 44-160 (IETS…APTF) and 161-280 (KEPA…MPLF). N-linked (GlcNAc...) asparagine glycans are attached at residues asparagine 56 and asparagine 98. 4 N-linked (GlcNAc...) asparagine glycosylation sites follow: asparagine 342, asparagine 374, asparagine 716, and asparagine 729. The helical transmembrane segment at 832-852 (IATVVIIISVCMLVFVVAMGV) threads the bilayer. The Cytoplasmic segment spans residues 853–955 (YRVRIAHQHF…LEWDDSTLPY (103 aa)). The segment at 887 to 955 (PMEKHEGPGH…LEWDDSTLPY (69 aa)) is disordered. The segment covering 888–898 (MEKHEGPGHGE) has biased composition (basic and acidic residues). Composition is skewed to acidic residues over residues 899–913 (DETEGEEEEEAEEEM) and 920–929 (DDSEEEEEEE).

The protein belongs to the calsyntenin family. In terms of processing, proteolytically processed under normal cellular conditions. A primary zeta-cleavage generates a large extracellular (soluble) N-terminal domain (sAlc) and a short C-terminal transmembrane fragment (CTF1). A secondary cleavage catalyzed by gamma-secretase within the transmembrane domain releases the beta-Alc-gamma chain in the extracellular milieu and produces an intracellular fragment (AlcICD). This processing is strongly suppressed in the tripartite complex formed with APBA2 and APP, which seems to prevent the association with PSEN1. In terms of tissue distribution, restricted to the brain.

The protein resides in the postsynaptic cell membrane. It is found in the endoplasmic reticulum membrane. The protein localises to the golgi apparatus membrane. Its subcellular location is the cell projection. It localises to the dendrite. Its function is as follows. Postsynaptic adhesion molecule that binds to presynaptic neurexins to mediate synapse formation, and which is involved in learning and memory. Promotes synapse development by acting as a cell adhesion molecule at the postsynaptic membrane, which associates with neurexin-alpha at the presynaptic membrane. In Homo sapiens (Human), this protein is Calsyntenin-2.